A 193-amino-acid polypeptide reads, in one-letter code: MSNISLIVGLGNPGSEYAQTRHNAGFWFVEQLADKYGITIKNDPKFHGISGRGNIEGHDVRLLLPMTYMNRSGQSVVPFSKFYQIAPEAILIAHDELDMNPGVIRLKTGGGHGGHNGLRDIVPHIGPNFHRLRIGIGHPGSKERVSGHVLGKAPSSEQSLMDGAIDHALSKVKLLVQGQVPQAMNQINAYKPA.

Tyrosine 17 contacts tRNA. The active-site Proton acceptor is the histidine 22. TRNA-binding residues include tyrosine 68, asparagine 70, and asparagine 116.

It belongs to the PTH family. In terms of assembly, monomer.

The protein localises to the cytoplasm. It catalyses the reaction an N-acyl-L-alpha-aminoacyl-tRNA + H2O = an N-acyl-L-amino acid + a tRNA + H(+). Hydrolyzes ribosome-free peptidyl-tRNAs (with 1 or more amino acids incorporated), which drop off the ribosome during protein synthesis, or as a result of ribosome stalling. Its function is as follows. Catalyzes the release of premature peptidyl moieties from peptidyl-tRNA molecules trapped in stalled 50S ribosomal subunits, and thus maintains levels of free tRNAs and 50S ribosomes. This chain is Peptidyl-tRNA hydrolase, found in Acinetobacter baumannii (strain AB0057).